Here is a 49-residue protein sequence, read N- to C-terminus: Thymopoietin-1 (49 aa).

The LEM-like domain occupies 4–47; sequence LEDPSVLTKEKLKSELVANNVTLPAGEQRKDVYVELYLQHLTAL. The tract at residues 32-36 is biological activity; sequence RKDVY.

Belongs to the thymopoietin family.

Its function is as follows. Hormone of the thymus with pleiotropic actions on prothymocytes, mature T-cells, the nicotinic acetylcholine receptor, and pituitary corticotrophs. In Bos taurus (Bovine), this protein is Thymopoietin-1.